An 854-amino-acid chain; its full sequence is Protein mono-ADP-ribosyltransferase PARP9 (854 aa).

2 consecutive Macro domains span residues 107-296 (LQVF…EFIL) and 306-487 (TPSF…AKRS). The region spanning 628–850 (IQQQKTQDEM…QHPWRGFASG (223 aa)) is the PARP catalytic domain.

This sequence belongs to the ARTD/PARP family. Forms a stable complex with E3 ligase DTX3L; the interaction is required for PARP9 mediated ADP-ribosylation of ubiquitin. Interacts (via PARP catalytic domain) with DTX3L (via N-terminus). Forms a complex with STAT1 and DTX3L independently of IFNB1 or IFNG-mediated STAT1 'Tyr-701' phosphorylation. Forms a complex with STAT1, DTX3L and histone H2B H2BC9/H2BJ; the interaction is likely to induce H2BC9/H2BJ ubiquitination. Interacts (via N-terminus) with STAT1. Interacts with PARP14 in IFNG-stimulated macrophages; the interaction prevents PARP14-mediated STAT1 and STAT6 ADP-riboslylation. Interacts with PARP1 (when poly-ADP-ribosylated). ADP-ribosylated by PARP14. Expressed in lymphocyte-rich tissues, spleen, lymph nodes, peripheral blood lymphocytes and colonic mucosa. Expressed in macrophages. Also expressed in nonhematopoietic tissues such as heart and skeletal muscle. Isoform 2 is the predominant form. Most abundantly expressed in lymphomas with a brisk host inflammatory response. In diffuse large B-cell lymphomas tumors, expressed specifically by malignant B-cells.

It is found in the cytoplasm. The protein localises to the cytosol. It localises to the nucleus. It carries out the reaction [protein]-C-terminal glycine + NAD(+) = [protein]-C-terminal O-(ADP-D-ribosyl)-glycine + nicotinamide. Binding to poly(ADP-ribose) does not affect its activity. Its function is as follows. ADP-ribosyltransferase which, in association with E3 ligase DTX3L, plays a role in DNA damage repair and in immune responses including interferon-mediated antiviral defenses. Within the complex, enhances DTX3L E3 ligase activity which is further enhanced by PARP9 binding to poly(ADP-ribose). In association with DTX3L and in presence of E1 and E2 enzymes, mediates NAD(+)-dependent mono-ADP-ribosylation of ubiquitin which prevents ubiquitin conjugation to substrates such as histones. During DNA repair, PARP1 recruits PARP9/BAL1-DTX3L complex to DNA damage sites via PARP9 binding to ribosylated PARP1. Subsequent PARP1-dependent PARP9/BAL1-DTX3L-mediated ubiquitination promotes the rapid and specific recruitment of 53BP1/TP53BP1, UIMC1/RAP80, and BRCA1 to DNA damage sites. In response to DNA damage, PARP9-DTX3L complex is required for efficient non-homologous end joining (NHEJ); the complex function is negatively modulated by PARP9 activity. Dispensable for B-cell receptor (BCR) assembly through V(D)J recombination and class switch recombination (CSR). In macrophages, positively regulates pro-inflammatory cytokines production in response to IFNG stimulation by suppressing PARP14-mediated STAT1 ADP-ribosylation and thus promoting STAT1 phosphorylation. Also suppresses PARP14-mediated STAT6 ADP-ribosylation. The chain is Protein mono-ADP-ribosyltransferase PARP9 (PARP9) from Homo sapiens (Human).